The chain runs to 111 residues: UPF0339 protein BP0521 (111 aa).

Tandem repeats lie at residues 9-57 and 60-108. The tract at residues 86–111 is disordered; the sequence is TQARDNGIASVKSNAPGAPTKDQTQA.

This sequence belongs to the UPF0339 family. Duplicated subfamily.

The protein is UPF0339 protein BP0521 of Bordetella pertussis (strain Tohama I / ATCC BAA-589 / NCTC 13251).